We begin with the raw amino-acid sequence, 236 residues long: Small ribosomal subunit protein uS5 (236 aa).

Residues 61-124 form the S5 DRBM domain; the sequence is ENQEVLDIAL…NYAKLNIIEI (64 aa).

It belongs to the universal ribosomal protein uS5 family. As to quaternary structure, part of the 30S ribosomal subunit. Contacts protein S4.

With S4 and S12 plays an important role in translational accuracy. The polypeptide is Small ribosomal subunit protein uS5 (Pyrococcus furiosus (strain ATCC 43587 / DSM 3638 / JCM 8422 / Vc1)).